Here is a 360-residue protein sequence, read N- to C-terminus: Phospho-N-acetylmuramoyl-pentapeptide-transferase (360 aa).

Transmembrane regions (helical) follow at residues 2–22, 52–72, 80–100, 114–134, 156–176, 189–209, 235–255, 259–279, 284–304, and 338–358; these read IAIL…TPLF, MGGV…NISA, GLLL…DDFI, WKII…LQFP, LAFA…NFLI, LDGL…VVTM, LAIV…WNAS, IFMG…LSIL, FLAV…VIQI, and FWLI…AEWV.

The protein belongs to the glycosyltransferase 4 family. MraY subfamily. It depends on Mg(2+) as a cofactor.

It localises to the cell membrane. It carries out the reaction UDP-N-acetyl-alpha-D-muramoyl-L-alanyl-gamma-D-glutamyl-meso-2,6-diaminopimeloyl-D-alanyl-D-alanine + di-trans,octa-cis-undecaprenyl phosphate = di-trans,octa-cis-undecaprenyl diphospho-N-acetyl-alpha-D-muramoyl-L-alanyl-D-glutamyl-meso-2,6-diaminopimeloyl-D-alanyl-D-alanine + UMP. It functions in the pathway cell wall biogenesis; peptidoglycan biosynthesis. Functionally, catalyzes the initial step of the lipid cycle reactions in the biosynthesis of the cell wall peptidoglycan: transfers peptidoglycan precursor phospho-MurNAc-pentapeptide from UDP-MurNAc-pentapeptide onto the lipid carrier undecaprenyl phosphate, yielding undecaprenyl-pyrophosphoryl-MurNAc-pentapeptide, known as lipid I. The polypeptide is Phospho-N-acetylmuramoyl-pentapeptide-transferase (Beutenbergia cavernae (strain ATCC BAA-8 / DSM 12333 / CCUG 43141 / JCM 11478 / NBRC 16432 / NCIMB 13614 / HKI 0122)).